We begin with the raw amino-acid sequence, 111 residues long: Disintegrin lebein-1-alpha (111 aa).

Residues 1–20 (MIQVLLVTICLAVFPYQGSS) form the signal peptide. Positions 21-47 (IILESGNVNDYEIVYPKKVTVLPTGAM) are excised as a propeptide. One can recognise a Disintegrin domain in the interval 47-111 (MNSGNPCCDP…SDCPRNPYKD (65 aa)). 4 disulfide bridges follow: C53-C76, C67-C73, C72-C97, and C85-C104. Positions 89 to 91 (RGD) match the Cell attachment site motif.

It belongs to the disintegrin family. Dimeric disintegrin subfamily. As to quaternary structure, heterodimer with subunit beta; disulfide-linked. In terms of tissue distribution, expressed by the venom gland.

Its subcellular location is the secreted. Functionally, strongly inhibits ADP-induced platelet aggregation on human platelet-rich plasma. Also avidly binds to the laminin-binding beta-1 integrins (alpha-3/beta-1, alpha-6/beta-1, and alpha-7/beta-1) in an RGD-independent manner. The polypeptide is Disintegrin lebein-1-alpha (Macrovipera lebetinus (Levantine viper)).